A 459-amino-acid chain; its full sequence is LAS seventeen-binding protein 3 (459 aa).

The disordered stretch occupies residues 219 to 403; the sequence is RPSNGGRGSF…APTSPSTSSP (185 aa). Phosphoserine is present on serine 227. Positions 229–242 are enriched in acidic residues; that stretch reads DDDEDDYYDDDDYY. Positions 243-262 are enriched in low complexity; the sequence is NDIPSSFSSTDASSTRPNTR. Polar residues predominate over residues 289–300; it reads YSRNSRLAPTNS. Threonine 298 carries the phosphothreonine modification. Phosphoserine occurs at positions 300 and 303. Acidic residues predominate over residues 340–350; the sequence is DEYDDYDDDYE. Residues 351–371 show a composition bias toward basic and acidic residues; it reads SGYRRGNGRDRTKDREVDDLS. The span at 372–391 shows a compositional bias: polar residues; it reads NRFSKSRISSASTPQTSQGR. Threonine 393 bears the Phosphothreonine mark. Over residues 393–403 the composition is skewed to low complexity; that stretch reads TAPTSPSTSSP. Phosphoserine is present on residues serine 397, serine 402, and serine 416. The SH3 domain maps to 400–459; the sequence is TSSPKAVALYSFAGEESGDLPFRKGDVITILKKSDSQNDWWTGRVNGREGIFPANYVELV.

The protein belongs to the SH3YL1 family. As to quaternary structure, interacts with LAS17. Phosphorylation of Ser-397 is induced 2-fold in response to mating pheromone.

Its subcellular location is the cytoplasm. The polypeptide is LAS seventeen-binding protein 3 (LSB3) (Saccharomyces cerevisiae (strain YJM789) (Baker's yeast)).